Consider the following 58-residue polypeptide: Large ribosomal subunit protein eL37 (58 aa).

Positions 20, 23, 35, and 38 each coordinate Zn(2+). The C4-type zinc-finger motif lies at 20 to 38; that stretch reads CRRCGEKSYHTKKKVCSSC.

This sequence belongs to the eukaryotic ribosomal protein eL37 family. Zn(2+) serves as cofactor.

In terms of biological role, binds to the 23S rRNA. In Haloquadratum walsbyi (strain DSM 16790 / HBSQ001), this protein is Large ribosomal subunit protein eL37.